Consider the following 389-residue polypeptide: D(-)-tartrate dehydratase (389 aa).

Residues Asn-21, Asn-55, Lys-102, Tyr-156, Lys-182, 182-184, 213-215, Glu-239, Glu-265, His-322, and 341-343 contribute to the substrate site; these read KMK, DAN, and ESY. Catalysis depends on Lys-184, which acts as the acceptor. Mg(2+) is bound by residues Asp-213, Glu-239, and Glu-265. His-322 acts as the Proton donor/acceptor in catalysis.

It belongs to the mandelate racemase/muconate lactonizing enzyme family. Homooctamer; tetramer of dimers. Requires Mg(2+) as cofactor.

The enzyme catalyses (S,S)-tartrate = oxaloacetate + H2O. In terms of biological role, catalyzes the dehydration of D-tartrate to oxaloacetate. The chain is D(-)-tartrate dehydratase (tarD) from Bradyrhizobium diazoefficiens (strain JCM 10833 / BCRC 13528 / IAM 13628 / NBRC 14792 / USDA 110).